The following is a 278-amino-acid chain: Bifunctional protein FolD (278 aa).

NADP(+) is bound by residues 165–167, Ser-190, and Thr-231; that span reads GRS.

This sequence belongs to the tetrahydrofolate dehydrogenase/cyclohydrolase family. As to quaternary structure, homodimer.

The catalysed reaction is (6R)-5,10-methylene-5,6,7,8-tetrahydrofolate + NADP(+) = (6R)-5,10-methenyltetrahydrofolate + NADPH. The enzyme catalyses (6R)-5,10-methenyltetrahydrofolate + H2O = (6R)-10-formyltetrahydrofolate + H(+). The protein operates within one-carbon metabolism; tetrahydrofolate interconversion. In terms of biological role, catalyzes the oxidation of 5,10-methylenetetrahydrofolate to 5,10-methenyltetrahydrofolate and then the hydrolysis of 5,10-methenyltetrahydrofolate to 10-formyltetrahydrofolate. The protein is Bifunctional protein FolD of Clostridium novyi (strain NT).